The sequence spans 755 residues: uncharacterized protein (755 aa).

The next 9 helical transmembrane spans lie at 46–66 (LGLG…GGLY), 70–90 (LKTI…GTIV), 93–113 (GWGL…YLAV), 118–138 (GAMV…NVST), 143–163 (FTSL…IWPF), 411–431 (IAHL…IFVL), 446–466 (LLGT…IQDP), 482–502 (ALLR…ALIL), and 514–534 (ALLS…GLAF).

Belongs to the YccS/YhfK family.

Its subcellular location is the cell membrane. This is an uncharacterized protein from Synechocystis sp. (strain ATCC 27184 / PCC 6803 / Kazusa).